We begin with the raw amino-acid sequence, 346 residues long: [LysW]-lysine/[LysW]-ornithine hydrolase (346 aa).

His-68 serves as a coordination point for Zn(2+). Asp-70 is an active-site residue. Asp-92 is a binding site for Zn(2+). Glu-122 acts as the Proton acceptor in catalysis. Zn(2+) contacts are provided by Glu-123, Glu-146, and His-317.

The protein belongs to the peptidase M20A family. LysK subfamily. Zn(2+) serves as cofactor. It depends on Co(2+) as a cofactor.

Its subcellular location is the cytoplasm. It catalyses the reaction [amino-group carrier protein]-C-terminal-gamma-(L-lysyl)-L-glutamate + H2O = [amino-group carrier protein]-C-terminal-L-glutamate + L-lysine. The enzyme catalyses [amino-group carrier protein]-C-terminal-gamma-(L-ornithyl)-L-glutamate + H2O = [amino-group carrier protein]-C-terminal-L-glutamate + L-ornithine. Its pathway is amino-acid biosynthesis; L-lysine biosynthesis via AAA pathway; L-lysine from L-alpha-aminoadipate (Thermus route): step 5/5. It participates in amino-acid biosynthesis; L-arginine biosynthesis. Catalyzes the release of L-lysine from [LysW]-gamma-L-lysine and the release of L-ornithine from [LysW]-L-ornithine. This chain is [LysW]-lysine/[LysW]-ornithine hydrolase, found in Saccharolobus islandicus (strain Y.G.57.14 / Yellowstone #1) (Sulfolobus islandicus).